The following is a 343-amino-acid chain: Probable dual-specificity RNA methyltransferase RlmN (343 aa).

The active-site Proton acceptor is E91. A Radical SAM core domain is found at 97 to 327; it reads YKHGNSICVS…TTIRREMGSD (231 aa). A disulfide bridge links C104 with C332. [4Fe-4S] cluster-binding residues include C111, C115, and C118. S-adenosyl-L-methionine-binding positions include 158 to 159, S190, 213 to 215, and N289; these read GE and SLH. C332 serves as the catalytic S-methylcysteine intermediate.

The protein belongs to the radical SAM superfamily. RlmN family. It depends on [4Fe-4S] cluster as a cofactor.

Its subcellular location is the cytoplasm. The catalysed reaction is adenosine(2503) in 23S rRNA + 2 reduced [2Fe-2S]-[ferredoxin] + 2 S-adenosyl-L-methionine = 2-methyladenosine(2503) in 23S rRNA + 5'-deoxyadenosine + L-methionine + 2 oxidized [2Fe-2S]-[ferredoxin] + S-adenosyl-L-homocysteine. The enzyme catalyses adenosine(37) in tRNA + 2 reduced [2Fe-2S]-[ferredoxin] + 2 S-adenosyl-L-methionine = 2-methyladenosine(37) in tRNA + 5'-deoxyadenosine + L-methionine + 2 oxidized [2Fe-2S]-[ferredoxin] + S-adenosyl-L-homocysteine. Specifically methylates position 2 of adenine 2503 in 23S rRNA and position 2 of adenine 37 in tRNAs. This chain is Probable dual-specificity RNA methyltransferase RlmN, found in Clostridium novyi (strain NT).